The primary structure comprises 81 residues: uncharacterized protein (81 aa).

This is an uncharacterized protein from Caenorhabditis elegans.